The primary structure comprises 267 residues: Acyl-[acyl-carrier-protein]--UDP-N-acetylglucosamine O-acyltransferase (267 aa).

It belongs to the transferase hexapeptide repeat family. LpxA subfamily. As to quaternary structure, homotrimer.

The protein localises to the cytoplasm. It carries out the reaction a (3R)-hydroxyacyl-[ACP] + UDP-N-acetyl-alpha-D-glucosamine = a UDP-3-O-[(3R)-3-hydroxyacyl]-N-acetyl-alpha-D-glucosamine + holo-[ACP]. It functions in the pathway glycolipid biosynthesis; lipid IV(A) biosynthesis; lipid IV(A) from (3R)-3-hydroxytetradecanoyl-[acyl-carrier-protein] and UDP-N-acetyl-alpha-D-glucosamine: step 1/6. In terms of biological role, involved in the biosynthesis of lipid A, a phosphorylated glycolipid that anchors the lipopolysaccharide to the outer membrane of the cell. The protein is Acyl-[acyl-carrier-protein]--UDP-N-acetylglucosamine O-acyltransferase of Proteus mirabilis (strain HI4320).